Reading from the N-terminus, the 389-residue chain is 1-deoxy-D-xylulose 5-phosphate reductoisomerase (389 aa).

NADPH-binding residues include S11, G12, S13, V14, N39, and N122. A 1-deoxy-D-xylulose 5-phosphate-binding site is contributed by K123. Position 124 (E124) interacts with NADPH. D148 serves as a coordination point for Mn(2+). 4 residues coordinate 1-deoxy-D-xylulose 5-phosphate: S149, E150, S174, and H197. E150 is a binding site for Mn(2+). G203 is a binding site for NADPH. Residues S210, N215, K216, and E219 each contribute to the 1-deoxy-D-xylulose 5-phosphate site. Mn(2+) is bound at residue E219.

It belongs to the DXR family. The cofactor is Mg(2+). It depends on Mn(2+) as a cofactor.

It carries out the reaction 2-C-methyl-D-erythritol 4-phosphate + NADP(+) = 1-deoxy-D-xylulose 5-phosphate + NADPH + H(+). It participates in isoprenoid biosynthesis; isopentenyl diphosphate biosynthesis via DXP pathway; isopentenyl diphosphate from 1-deoxy-D-xylulose 5-phosphate: step 1/6. Functionally, catalyzes the NADPH-dependent rearrangement and reduction of 1-deoxy-D-xylulose-5-phosphate (DXP) to 2-C-methyl-D-erythritol 4-phosphate (MEP). The protein is 1-deoxy-D-xylulose 5-phosphate reductoisomerase of Leptospira interrogans serogroup Icterohaemorrhagiae serovar copenhageni (strain Fiocruz L1-130).